The sequence spans 1778 residues: Protein TIC 214 (1778 aa).

The next 6 membrane-spanning stretches (helical) occupy residues 18 to 38 (IINS…FSIG), 67 to 87 (FIAG…HLAL), 90 to 110 (PHTI…WNNN), 132 to 152 (VFLN…SSML), 175 to 195 (VGWL…LVWI), and 226 to 246 (IFSI…PSPI). Positions 1498–1520 (GQGELESDNEKKRNPESALSNQE) are disordered.

It belongs to the TIC214 family. As to quaternary structure, part of the Tic complex.

Its subcellular location is the plastid. It is found in the chloroplast inner membrane. In terms of biological role, involved in protein precursor import into chloroplasts. May be part of an intermediate translocation complex acting as a protein-conducting channel at the inner envelope. This Arabis hirsuta (Hairy rock-cress) protein is Protein TIC 214.